The chain runs to 412 residues: Burnettramic acids biosynthesis cluster protein E (412 aa).

Disordered stretches follow at residues 1 to 66 (MAIA…KKIR), 308 to 342 (RNPT…SLAT), and 386 to 412 (SRAE…AAKG). Residues 36-58 (EDEQWALDELQDELCQEEPSDSE) show a composition bias toward acidic residues. The segment covering 395–404 (EATTEPSVQS) has biased composition (polar residues).

The protein operates within mycotoxin biosynthesis. Part of the gene cluster that mediates the biosynthesis of burnettramic acids, an unusual class of bolaamphiphilic pyrrolizidinediones that display potent antibacterial, antifungal, and cytotoxic activities. The first step of the biosynthesis of burnettramic acids is the hydroxylation of proline by the proline hydroxylase buaE to generate 4-hydroxyproline. The PKS-NRPS buaA and trans-enoyl reductase buaC construct the highly reduced polyketide chain, and the condensation (C) domain of buaA then catalyzes the amide bond formation with the activated 4-hydroxyproline. This is followed by the R domain releasing the nascent polyketide-peptide directly via a Dieckmann condensation to afford a tetramic acid fused to the hydroxyproline, generating the bicyclic pyrrolidinedione moiety. The cytochrome P450 monooxygenases buaD and buaG are likely responsible for the multiple hydroxylations on the polyketide chain and its terminus, although in the heterologous context, buaD does not appear to be required. Therefore, while buaG may be a multifunctional cytochrome P450 monooxygenase, it cannot be ruled out that the two secondary alcohols on the polyketide chain could have an acetate origin. Finally, the glycosyltransferase buaB transfers beta-D-mannose to the aglycone burnettramic acid A to form burnettramic acid A. Burnettramic acid B is a minor cis-pyrrolizidine epimer of burnettramic acid A and it is likely that small amounts of it form naturally in acidic environments. The role of the uncharacterized protein buaF in the biosynthesis of burnettramic acids has still to be determined. The chain is Burnettramic acids biosynthesis cluster protein E from Petromyces alliaceus (Aspergillus alliaceus).